Reading from the N-terminus, the 775-residue chain is 1,4-alpha-glucan branching enzyme GlgB (775 aa).

The Nucleophile role is filled by aspartate 431. Glutamate 484 (proton donor) is an active-site residue.

The protein belongs to the glycosyl hydrolase 13 family. GlgB subfamily. Monomer.

It catalyses the reaction Transfers a segment of a (1-&gt;4)-alpha-D-glucan chain to a primary hydroxy group in a similar glucan chain.. It functions in the pathway glycan biosynthesis; glycogen biosynthesis. Catalyzes the formation of the alpha-1,6-glucosidic linkages in glycogen by scission of a 1,4-alpha-linked oligosaccharide from growing alpha-1,4-glucan chains and the subsequent attachment of the oligosaccharide to the alpha-1,6 position. The sequence is that of 1,4-alpha-glucan branching enzyme GlgB from Parasynechococcus marenigrum (strain WH8102).